A 479-amino-acid polypeptide reads, in one-letter code: HSPB1-associated protein 1 (479 aa).

The interval 1 to 25 (MEAGCEGSSPQTLGERTMGEEGERV) is disordered. Residues 88–208 (ETECSYVDAT…EDTPFLYPTR (121 aa)) are interaction with HSPB1. The 165-residue stretch at 124–288 (WAYADYKYFV…HLARVEEAVT (165 aa)) folds into the JmjC domain. Positions 347–412 (PRANGEEPGV…GDSQECTSRN (66 aa)) are disordered. Positions 356 to 369 (VQEHMEVEQARDPS) are enriched in basic and acidic residues.

As to quaternary structure, interacts with CRYAB and HSPB1. As to expression, widely expressed. Highly expressed by Sertoli cells in testis (at protein level).

It localises to the cytoplasm. Its function is as follows. May play a role in cellular stress response. The polypeptide is HSPB1-associated protein 1 (Hspbap1) (Rattus norvegicus (Rat)).